The sequence spans 100 residues: Small ubiquitin-related modifier 1 (100 aa).

A compositionally biased stretch (basic and acidic residues) spans 1–12 (MSAAGEEDKKPA). A disordered region spans residues 1–23 (MSAAGEEDKKPAGGEGGGAHINL). The Ubiquitin-like domain maps to 19 to 96 (AHINLKVKGQ…IDAMLHQTGG (78 aa)). G96 participates in a covalent cross-link: Glycyl lysine isopeptide (Gly-Lys) (interchain with K-? in acceptor proteins).

It belongs to the ubiquitin family. SUMO subfamily. As to quaternary structure, interacts with SAE2, SCE1 and SIZ1. Covalently attached to a number of proteins.

It is found in the nucleus. The protein resides in the cytoplasm. Functionally, ubiquitin-like protein which can be covalently attached to target lysines as a monomer. Does not seem to be involved in protein degradation and may function as an antagonist of ubiquitin in the degradation process. The chain is Small ubiquitin-related modifier 1 (SUMO1) from Oryza sativa subsp. japonica (Rice).